The chain runs to 187 residues: Urease accessory protein UreE (187 aa).

Residues 154–187 (RANSAQGHGHSHGHSHSHDHHGYHHHGDGNWHKH) are disordered. The span at 162 to 177 (GHSHGHSHSHDHHGYH) shows a compositional bias: basic residues. Residues 178–187 (HHGDGNWHKH) show a composition bias toward basic and acidic residues.

The protein belongs to the UreE family.

It localises to the cytoplasm. Its function is as follows. Involved in urease metallocenter assembly. Binds nickel. Probably functions as a nickel donor during metallocenter assembly. In Actinobacillus pleuropneumoniae (Haemophilus pleuropneumoniae), this protein is Urease accessory protein UreE.